The chain runs to 504 residues: ATP synthase subunit alpha, chloroplastic (504 aa).

An ATP-binding site is contributed by 169–176 (GDRQTGKT).

The protein belongs to the ATPase alpha/beta chains family. In terms of assembly, F-type ATPases have 2 components, CF(1) - the catalytic core - and CF(0) - the membrane proton channel. CF(1) has five subunits: alpha(3), beta(3), gamma(1), delta(1), epsilon(1). CF(0) has four main subunits: a, b, b' and c.

The protein resides in the plastid. The protein localises to the chloroplast thylakoid membrane. The catalysed reaction is ATP + H2O + 4 H(+)(in) = ADP + phosphate + 5 H(+)(out). Produces ATP from ADP in the presence of a proton gradient across the membrane. The alpha chain is a regulatory subunit. This chain is ATP synthase subunit alpha, chloroplastic, found in Stigeoclonium helveticum (Green alga).